A 957-amino-acid chain; its full sequence is Valine--tRNA ligase (957 aa).

A 'HIGH' region motif is present at residues 47–57 (PNITGQLHLGH). The short motif at 558 to 562 (KMSKS) is the 'KMSKS' region element. Lysine 561 is an ATP binding site. Positions 889–918 (FNKENEINRLKKESELINRKIETIQKLLDD) form a coiled coil.

It belongs to the class-I aminoacyl-tRNA synthetase family. ValS type 1 subfamily. In terms of assembly, monomer.

The protein localises to the cytoplasm. The enzyme catalyses tRNA(Val) + L-valine + ATP = L-valyl-tRNA(Val) + AMP + diphosphate. Its function is as follows. Catalyzes the attachment of valine to tRNA(Val). As ValRS can inadvertently accommodate and process structurally similar amino acids such as threonine, to avoid such errors, it has a 'posttransfer' editing activity that hydrolyzes mischarged Thr-tRNA(Val) in a tRNA-dependent manner. This Blochmanniella pennsylvanica (strain BPEN) protein is Valine--tRNA ligase.